We begin with the raw amino-acid sequence, 140 residues long: MTKQRTLSIIKPDAVEKNVIGEIYSRFEKAGLRIIAAKMKHLSKAEAERFYAVHKDRPFFSALVEFMISGPVMIQVLEGENAIAKNRELMGATNPKEAKAGTIRADFADSIDANAVHGSDAEDTAAQEIRYFFSDTEIFG.

Lysine 11, phenylalanine 59, arginine 87, threonine 93, arginine 104, and asparagine 114 together coordinate ATP. The active-site Pros-phosphohistidine intermediate is histidine 117.

The protein belongs to the NDK family. Homotetramer. Mg(2+) is required as a cofactor.

Its subcellular location is the cytoplasm. The enzyme catalyses a 2'-deoxyribonucleoside 5'-diphosphate + ATP = a 2'-deoxyribonucleoside 5'-triphosphate + ADP. It catalyses the reaction a ribonucleoside 5'-diphosphate + ATP = a ribonucleoside 5'-triphosphate + ADP. In terms of biological role, major role in the synthesis of nucleoside triphosphates other than ATP. The ATP gamma phosphate is transferred to the NDP beta phosphate via a ping-pong mechanism, using a phosphorylated active-site intermediate. This is Nucleoside diphosphate kinase from Francisella tularensis subsp. tularensis (strain SCHU S4 / Schu 4).